Reading from the N-terminus, the 384-residue chain is Dihydrolipoyllysine-residue acetyltransferase component of pyruvate dehydrogenase complex (384 aa).

Residues 2-77 (ANEFKFTDVG…SIGQVMAVIG (76 aa)) form the Lipoyl-binding domain. N6-lipoyllysine is present on K43. H356 is a catalytic residue.

It belongs to the 2-oxoacid dehydrogenase family. In terms of assembly, forms a 24-polypeptide structural core with octahedral symmetry. (R)-lipoate is required as a cofactor.

The catalysed reaction is N(6)-[(R)-dihydrolipoyl]-L-lysyl-[protein] + acetyl-CoA = N(6)-[(R)-S(8)-acetyldihydrolipoyl]-L-lysyl-[protein] + CoA. The pyruvate dehydrogenase complex catalyzes the overall conversion of pyruvate to acetyl-CoA and CO(2). It contains multiple copies of three enzymatic components: pyruvate dehydrogenase (E1), dihydrolipoamide acetyltransferase (E2) and lipoamide dehydrogenase (E3). The polypeptide is Dihydrolipoyllysine-residue acetyltransferase component of pyruvate dehydrogenase complex (pdhC) (Mycoplasma genitalium (strain ATCC 33530 / DSM 19775 / NCTC 10195 / G37) (Mycoplasmoides genitalium)).